The primary structure comprises 105 residues: Flagellar transcriptional regulator FlhD (105 aa).

It belongs to the FlhD family. Homodimer; disulfide-linked. Forms a heterohexamer composed of two FlhC and four FlhD subunits. Each FlhC binds a FlhD dimer, forming a heterotrimer, and a hexamer assembles by dimerization of two heterotrimers.

The protein localises to the cytoplasm. Functions in complex with FlhC as a master transcriptional regulator that regulates transcription of several flagellar and non-flagellar operons by binding to their promoter region. Activates expression of class 2 flagellar genes, including fliA, which is a flagellum-specific sigma factor that turns on the class 3 genes. Also regulates genes whose products function in a variety of physiological pathways. This is Flagellar transcriptional regulator FlhD from Cupriavidus pinatubonensis (strain JMP 134 / LMG 1197) (Cupriavidus necator (strain JMP 134)).